The primary structure comprises 1096 residues: Cohesin subunit scc-3 (1096 aa).

Positions 1–21 are enriched in polar residues; it reads MSETPTDQSPQRMSTRNQARV. Disordered regions lie at residues 1–53 and 67–106; these read MSET…KKRA and NLNNFSTPPKRGRPRGGGLGSARGGRAPMVRRTTTEESAE. Residues 261–312 adopt a coiled-coil conformation; the sequence is IELTQSKEKTSKQIEAEKAKLKNNSAGNEKYEALVAQRTQTEERAEEIRQII. The SCD domain maps to 320–405; sequence FVHRYRDVVP…NKFKDRLVSM (86 aa). The interval 1057-1096 is disordered; sequence DNMSVRSGMTVTSNATMRSTASSTRGRGRGRGRSRIADDF. A compositionally biased stretch (polar residues) spans 1060–1073; that stretch reads SVRSGMTVTSNATM.

Belongs to the SCC3 family. As to quaternary structure, component of the cohesin complex, composed of the smc-1 and smc-3 heterodimer attached via their hinge domain, scc-1 which links them, and scc-3. Interacts with scc-1, smc-1 and tim-1. In terms of tissue distribution, expressed in gonadal cells.

The protein resides in the nucleus. It is found in the chromosome. Functionally, component of the cohesin complex, a complex required for the cohesion of sister chromatids after DNA replication. The cohesin complex apparently forms a large proteinaceous ring within which sister chromatids can be trapped. At anaphase, the scc-1 subunit of the complex is cleaved and dissociates from chromatin, allowing sister chromatids to segregate. The cohesin complex may also play a role in spindle pole assembly during mitosis. Plays an essential role in cell division during embryonic development. Required for the assembly of the synaptonemal complex between homologous chromosomes to promote sister chromatid cohesion during mitosis and meiosis. Has a role in stabilization of homologous chromosome associations during meiotic synapsis. Required for chromosome segregation during mitosis and meiosis. Plays a role in DNA double-strand break (DSB) repair during meiotic recombination and promotes the assembly of the 9-1-1 cell-cycle checkpoint response complex which is required for inducing apoptosis in response to DNA damage, at DNA damage sites. This is Cohesin subunit scc-3 from Caenorhabditis elegans.